Reading from the N-terminus, the 306-residue chain is Low density lipoprotein receptor adapter protein 1 (306 aa).

Met-1 bears the N-acetylmethionine mark. Ser-14 is subject to Phosphoserine. The 125-residue stretch at 44–168 folds into the PID domain; that stretch reads GMVFSLKYLG…VAQAFKVAFE (125 aa). The tract at residues 178-204 is disordered; the sequence is EKREKANQEGGDVPGTRRDSTPSLKTS. Phosphoserine is present on residues Ser-197 and Ser-200. The Clathrin box motif lies at 210-214; it reads LLDLE. Residues 247-274 form an AP-2 complex binding region; it reads WELDDGLDEAFSRLAQSRTNPQVLDTGL. Residues 255 to 264 carry the [DE]-X(1,2)-F-X-X-[FL]-X-X-X-R motif motif; sequence EAFSRLAQSR.

In terms of assembly, interacts (via PID domain) with LDLR (via NPXY motifs). Binds to soluble clathrin trimers. Interacts with AP2B1; the interaction mediates the association with the AP-2 complex. Interacts with VLDLR. Interacts with LRP2.

The protein resides in the cytoplasm. Functionally, adapter protein (clathrin-associated sorting protein (CLASP)) required for efficient endocytosis of the LDL receptor (LDLR) in polarized cells such as hepatocytes and lymphocytes, but not in non-polarized cells (fibroblasts). May be required for LDL binding and internalization but not for receptor clustering in coated pits. May facilitate the endocytosis of LDLR and LDLR-LDL complexes from coated pits by stabilizing the interaction between the receptor and the structural components of the pits. May also be involved in the internalization of other LDLR family members. Binds to phosphoinositides, which regulate clathrin bud assembly at the cell surface. Required for trafficking of LRP2 to the endocytic recycling compartment which is necessary for LRP2 proteolysis, releasing a tail fragment which translocates to the nucleus and mediates transcriptional repression. This chain is Low density lipoprotein receptor adapter protein 1, found in Rattus norvegicus (Rat).